Consider the following 231-residue polypeptide: 7-cyano-7-deazaguanine synthase (231 aa).

8–18 (FSGGQDSTTCL) contacts ATP. Cysteine 188, cysteine 197, cysteine 200, and cysteine 203 together coordinate Zn(2+).

It belongs to the QueC family. Requires Zn(2+) as cofactor.

It catalyses the reaction 7-carboxy-7-deazaguanine + NH4(+) + ATP = 7-cyano-7-deazaguanine + ADP + phosphate + H2O + H(+). The protein operates within purine metabolism; 7-cyano-7-deazaguanine biosynthesis. Catalyzes the ATP-dependent conversion of 7-carboxy-7-deazaguanine (CDG) to 7-cyano-7-deazaguanine (preQ(0)). This Citrobacter koseri (strain ATCC BAA-895 / CDC 4225-83 / SGSC4696) protein is 7-cyano-7-deazaguanine synthase.